Here is a 249-residue protein sequence, read N- to C-terminus: Hydantoin racemase (249 aa).

This sequence belongs to the HyuE racemase family. In terms of assembly, homohexamer.

The enzyme catalyses a D-5-monosubstituted hydantoin = a L-5-monosubstituted hydantoin. The catalysed reaction is D-5-[2-(methylsulfanyl)ethyl]hydantoin = L-5-[2-(methysulfanyl)ethyl]hydantoin. It carries out the reaction D-5-benzylhydantoin = L-5-benzylhydantoin. It catalyses the reaction D-5-isopropylhydantoin = L-5-isopropylhydantoin. The enzyme catalyses D-5-isobutylhydantoin = L-5-isobutylhydantoin. Its activity is regulated as follows. Strongly inhibited by Cu(2+) and Zn(2+). Slightly stimulated by the addition of Mn(2+) or Co(2+), but also by metal-chelating agents such as EDTA or EGTA, indicating that the enzyme is not a metalloenzyme. Involved in the asymmetric conversion of racemic 5-substituted hydantoins to the corresponding L-amino acids. Catalyzes the racemization via enolization of D- and L-5-monosubstituted hydantoins. Is able to racemize 5-substituted hydantoins having aromatic or aliphatic substituents such as 5-(2-methylthioethyl)hydantoin, 5-isopropylhydantoin, 5-isobutylhydantoin and 5-benzylhydantoin. The chain is Hydantoin racemase from Pseudomonas sp. (strain NS671).